The chain runs to 335 residues: Methionine import ATP-binding protein MetN 2 (335 aa).

Residues 2-242 (IEFHNVHKTY…PQHSTTKRFV (241 aa)) enclose the ABC transporter domain. 38–45 (GHSGAGKS) provides a ligand contact to ATP.

The protein belongs to the ABC transporter superfamily. Methionine importer (TC 3.A.1.24) family. The complex is composed of two ATP-binding proteins (MetN), two transmembrane proteins (MetI) and a solute-binding protein (MetQ).

The protein localises to the cell inner membrane. It catalyses the reaction L-methionine(out) + ATP + H2O = L-methionine(in) + ADP + phosphate + H(+). It carries out the reaction D-methionine(out) + ATP + H2O = D-methionine(in) + ADP + phosphate + H(+). Part of the ABC transporter complex MetNIQ involved in methionine import. Responsible for energy coupling to the transport system. This Pseudomonas syringae pv. tomato (strain ATCC BAA-871 / DC3000) protein is Methionine import ATP-binding protein MetN 2.